Reading from the N-terminus, the 137-residue chain is DNA-binding protein H-NS (137 aa).

A DNA-binding region spans residues 112 to 117; the sequence is QGRTPA.

Belongs to the histone-like protein H-NS family. In terms of assembly, homodimer that oligomerizes on DNA into higher-order complexes that form bridges between disparate regions of DNA compacting it. Interacts with Hha, Cnu and StpA.

It is found in the cytoplasm. The protein localises to the nucleoid. Its function is as follows. A DNA-binding protein implicated in transcriptional repression and chromosome organization and compaction. Binds nucleation sites in AT-rich DNA and bridges them, forming higher-order nucleoprotein complexes and condensing the chromosome. As many horizontally transferred genes are AT-rich, it plays a central role in silencing foreign genes. A subset of genes are repressed by H-NS in association with other proteins. The sequence is that of DNA-binding protein H-NS (hns) from Escherichia coli O6:H1 (strain CFT073 / ATCC 700928 / UPEC).